Here is a 1358-residue protein sequence, read N- to C-terminus: DNA-directed RNA polymerase subunit beta (1358 aa).

This sequence belongs to the RNA polymerase beta chain family. In terms of assembly, the RNAP catalytic core consists of 2 alpha, 1 beta, 1 beta' and 1 omega subunit. When a sigma factor is associated with the core the holoenzyme is formed, which can initiate transcription.

It catalyses the reaction RNA(n) + a ribonucleoside 5'-triphosphate = RNA(n+1) + diphosphate. In terms of biological role, DNA-dependent RNA polymerase catalyzes the transcription of DNA into RNA using the four ribonucleoside triphosphates as substrates. This is DNA-directed RNA polymerase subunit beta from Francisella philomiragia subsp. philomiragia (strain ATCC 25017 / CCUG 19701 / FSC 153 / O#319-036).